We begin with the raw amino-acid sequence, 273 residues long: Large ribosomal subunit protein uL2 (273 aa).

Positions 224-264 (AMNPVDHPHGGGEGRNFGKHPVTPWGIQTKGKKTRKNKRTD) are disordered. Residues 253-264 (KGKKTRKNKRTD) show a composition bias toward basic residues.

Belongs to the universal ribosomal protein uL2 family. Part of the 50S ribosomal subunit. Forms a bridge to the 30S subunit in the 70S ribosome.

Its function is as follows. One of the primary rRNA binding proteins. Required for association of the 30S and 50S subunits to form the 70S ribosome, for tRNA binding and peptide bond formation. It has been suggested to have peptidyltransferase activity; this is somewhat controversial. Makes several contacts with the 16S rRNA in the 70S ribosome. The sequence is that of Large ribosomal subunit protein uL2 from Buchnera aphidicola subsp. Acyrthosiphon pisum (strain 5A).